The chain runs to 495 residues: Lysine--tRNA ligase (495 aa).

Mg(2+) contacts are provided by E406 and E413.

This sequence belongs to the class-II aminoacyl-tRNA synthetase family. Homodimer. It depends on Mg(2+) as a cofactor.

The protein resides in the cytoplasm. It catalyses the reaction tRNA(Lys) + L-lysine + ATP = L-lysyl-tRNA(Lys) + AMP + diphosphate. This is Lysine--tRNA ligase from Staphylococcus aureus (strain MW2).